A 198-amino-acid chain; its full sequence is Na(+)-translocating NADH-quinone reductase subunit E (198 aa).

6 helical membrane-spanning segments follow: residues Ser-11–Val-31, Phe-39–Val-59, Phe-77–Val-97, Gly-110–Val-130, Ile-140–Ile-160, and Leu-176–Val-196.

The protein belongs to the NqrDE/RnfAE family. In terms of assembly, composed of six subunits; NqrA, NqrB, NqrC, NqrD, NqrE and NqrF. Post-translationally, the N-terminus is blocked.

Its subcellular location is the cell inner membrane. The catalysed reaction is a ubiquinone + n Na(+)(in) + NADH + H(+) = a ubiquinol + n Na(+)(out) + NAD(+). With respect to regulation, this reaction is tightly coupled to the Na(+) pumping activity and specifically requires Na(+) for activity. Inhibited by korormicin and 2-N-heptyl-4-hydroxyquinoline N-oxide (HQNO). NQR complex catalyzes the reduction of ubiquinone-1 to ubiquinol by two successive reactions, coupled with the transport of Na(+) ions from the cytoplasm to the periplasm. NqrA to NqrE are probably involved in the second step, the conversion of ubisemiquinone to ubiquinol. In Vibrio alginolyticus, this protein is Na(+)-translocating NADH-quinone reductase subunit E.